Here is a 25-residue protein sequence, read N- to C-terminus: Flagellar filament core protein flaB1 (25 aa).

Belongs to the bacterial flagellin family. In terms of assembly, the flagellum consists of an outer layer composed of two sheath proteins, flaA1 (44 kDa) and flaA2 (35 kDa) around a core that contains three proteins flaB1 (37 kDa), flaB2 (34 kDa) and flaB3 (32 kDa).

It is found in the periplasmic flagellum. Its subcellular location is the periplasm. Functionally, component of the core of the flagella. This is Flagellar filament core protein flaB1 (flaB1) from Brachyspira hyodysenteriae (Treponema hyodysenteriae).